A 405-amino-acid polypeptide reads, in one-letter code: Dematin (405 aa).

Disordered stretches follow at residues 1-29, 81-100, and 108-332; these read MERL…SPSS, SREC…PEVW, and IISQ…DRGN. A compositionally biased stretch (low complexity) spans 11–29; it reads SPGSVSSSRDSSVPGSPSS. Phosphoserine is present on residues Ser-16, Ser-18, Ser-26, Ser-92, Ser-96, Ser-110, and Ser-113. A compositionally biased stretch (low complexity) spans 113–124; sequence STPRTTGTPRTS. Thr-114 is subject to Phosphothreonine. Ser-156 and Ser-226 each carry phosphoserine. Acidic residues predominate over residues 216 to 228; it reads EEEEEEEDDDSEE. The tract at residues 224-308 is interaction with RASGRF2; the sequence is DDSEEEIKAI…SRLQSTEFSP (85 aa). Basic and acidic residues-rich tracts occupy residues 229–242 and 252–261; these read EIKA…EELS and ILKEEMEKSL. Residues Ser-269, Ser-279, Ser-289, Ser-303, Ser-315, Ser-333, Ser-372, and Ser-383 each carry the phosphoserine modification. Low complexity predominate over residues 277–292; that stretch reads HTSLHSGTSKSSSLPS. A compositionally biased stretch (polar residues) spans 294–322; that stretch reads GRTTLSRLQSTEFSPSGSEAGSPGLQNGE. One can recognise an HP domain in the interval 337–405; sequence VLEQKIYPYE…NELKKKASLF (69 aa). Phosphoserine; by PKA is present on Ser-403.

This sequence belongs to the villin/gelsolin family. In terms of assembly, monomeric (isoform 2); under reducing conditions. Self-associates. Exists under oxidizing condition as a trimer of two isoforms 2 and isoform 1 linked by disulfide bonds. Found in a complex with DMTN, F-actin and spectrin. Found in a complex with ADD2, DMTN and SLC2A1. Interacts with F-actin, ITPKB and spectrin. Isoform 2 interacts with SLC2A1 (via C-terminus cytoplasmic region). Interacts with RASGRF2. Phosphorylated. Phosphorylation at Ser-403 by PKA causes the C-terminal headpiece domain to associate with the N-terminal core domain, and leads to the inhibition of its actin bundling activity. As to expression, expressed in platelets. Isoform 1 and isoform 2 are expressed in mature erythrocytes (at protein level).

It localises to the cytoplasm. It is found in the cytosol. The protein resides in the perinuclear region. Its subcellular location is the cytoskeleton. The protein localises to the cell membrane. It localises to the membrane. It is found in the endomembrane system. The protein resides in the cell projection. In terms of biological role, membrane-cytoskeleton-associated protein with F-actin-binding activity that induces F-actin bundles formation and stabilization. Its F-actin-bundling activity is reversibly regulated upon its phosphorylation by the cAMP-dependent protein kinase A (PKA). Binds to the erythrocyte membrane glucose transporter-1 SLC2A1/GLUT1, and hence stabilizes and attaches the spectrin-actin network to the erythrocytic plasma membrane. Plays a role in maintaining the functional integrity of PKA-activated erythrocyte shape and the membrane mechanical properties. Also plays a role as a modulator of actin dynamics in fibroblasts; acts as a negative regulator of the RhoA activation pathway. In platelets, functions as a regulator of internal calcium mobilization across the dense tubular system that affects platelet granule secretion pathways and aggregation. Also required for the formation of a diverse set of cell protrusions, such as filopodia and lamellipodia, necessary for platelet cell spreading, motility and migration. Acts as a tumor suppressor and inhibits malignant cell transformation. The chain is Dematin (Dmtn) from Mus musculus (Mouse).